Here is a 79-residue protein sequence, read N- to C-terminus: Calcium/calmodulin-dependent protein kinase II inhibitor 2 (79 aa).

An inhibitory domain region spans residues 43-69; that stretch reads KRPPKLGQIGRAKRVVIEDDRIDEVLK.

Belongs to the CAMK2N family.

It is found in the nucleus. Its subcellular location is the cytoplasm. The protein localises to the cytosol. Functionally, potent and specific cellular inhibitor of CaM-kinase II (CAMK2). Traps Ca(2+)/calmodulin on CAMK2. This is Calcium/calmodulin-dependent protein kinase II inhibitor 2 (camk2n2) from Xenopus tropicalis (Western clawed frog).